Here is a 25-residue protein sequence, read N- to C-terminus: Xenoposin precursor fragment R2 (25 aa).

Expressed by the skin glands.

The protein localises to the secreted. Its function is as follows. Antimicrobial peptide. In Xenopus ruwenzoriensis (Uganda clawed frog), this protein is Xenoposin precursor fragment R2.